The primary structure comprises 689 residues: Putative ATP-dependent helicase IRC3 (689 aa).

In terms of domain architecture, Helicase ATP-binding spans 46-211 (NSIRQGTKRI…SMVMDKIVYH (166 aa)). ATP is bound at residue 59–66 (LATGGGKT). A DEAH box motif is present at residues 158–161 (DEAH). The Helicase C-terminal domain maps to 265 to 438 (ILKTYLHKKQ…KIDERLRALF (174 aa)).

It belongs to the helicase family. IRC3 subfamily.

Its subcellular location is the mitochondrion. The sequence is that of Putative ATP-dependent helicase IRC3 (IRC3) from Saccharomyces cerevisiae (strain ATCC 204508 / S288c) (Baker's yeast).